The primary structure comprises 314 residues: tRNA pseudouridine synthase B (314 aa).

The Nucleophile role is filled by Asp-47.

This sequence belongs to the pseudouridine synthase TruB family. Type 1 subfamily.

The enzyme catalyses uridine(55) in tRNA = pseudouridine(55) in tRNA. In terms of biological role, responsible for synthesis of pseudouridine from uracil-55 in the psi GC loop of transfer RNAs. The protein is tRNA pseudouridine synthase B of Vibrio campbellii (strain ATCC BAA-1116).